A 340-amino-acid chain; its full sequence is Heat-inducible transcription repressor HrcA (340 aa).

Belongs to the HrcA family.

Negative regulator of class I heat shock genes (grpE-dnaK-dnaJ and groELS operons). Prevents heat-shock induction of these operons. The sequence is that of Heat-inducible transcription repressor HrcA from Burkholderia mallei (strain NCTC 10247).